The chain runs to 194 residues: Large ribosomal subunit protein uL18 (194 aa).

Belongs to the universal ribosomal protein uL18 family. In terms of assembly, part of the 50S ribosomal subunit. Contacts the 5S and 23S rRNAs.

Its function is as follows. This is one of the proteins that bind and probably mediate the attachment of the 5S RNA into the large ribosomal subunit, where it forms part of the central protuberance. The polypeptide is Large ribosomal subunit protein uL18 (Methanococcus aeolicus (strain ATCC BAA-1280 / DSM 17508 / OCM 812 / Nankai-3)).